A 192-amino-acid chain; its full sequence is MELLKDKIKKEGRVTEDNILMVDSFLNHQMDVEFFNEVGKEFKDRFKNDQIDKILTIESTGIGLGIITAQYFDNVPVVFGKKIERLPRNKREEVFNSEVYSFTKKTIYNVVVDKKFIKPGEKILIVDDFLANACAVFGLIDVVKQAGAEVVGVGIVIEKGFQSGRAHLEDKGIRVESLVTIDKIEDGEVYFK.

Residues Leu20 and Asn27 each coordinate xanthine. 131–135 (ANACA) contributes to the 5-phospho-alpha-D-ribose 1-diphosphate binding site. Xanthine is bound at residue Lys159.

This sequence belongs to the purine/pyrimidine phosphoribosyltransferase family. Xpt subfamily. Homodimer.

The protein localises to the cytoplasm. It catalyses the reaction XMP + diphosphate = xanthine + 5-phospho-alpha-D-ribose 1-diphosphate. Its pathway is purine metabolism; XMP biosynthesis via salvage pathway; XMP from xanthine: step 1/1. In terms of biological role, converts the preformed base xanthine, a product of nucleic acid breakdown, to xanthosine 5'-monophosphate (XMP), so it can be reused for RNA or DNA synthesis. The polypeptide is Xanthine phosphoribosyltransferase 2 (Clostridium perfringens (strain ATCC 13124 / DSM 756 / JCM 1290 / NCIMB 6125 / NCTC 8237 / Type A)).